A 574-amino-acid polypeptide reads, in one-letter code: Arginine--tRNA ligase (574 aa).

The short motif at 121-131 (PNIAKEMHIGH) is the 'HIGH' region element.

It belongs to the class-I aminoacyl-tRNA synthetase family. In terms of assembly, monomer.

The protein localises to the cytoplasm. It carries out the reaction tRNA(Arg) + L-arginine + ATP = L-arginyl-tRNA(Arg) + AMP + diphosphate. This chain is Arginine--tRNA ligase, found in Buchnera aphidicola subsp. Acyrthosiphon pisum (strain 5A).